A 208-amino-acid polypeptide reads, in one-letter code: Thymidylate kinase (208 aa).

10–17 (GPDGSGKT) lines the ATP pocket.

This sequence belongs to the thymidylate kinase family.

It carries out the reaction dTMP + ATP = dTDP + ADP. Its function is as follows. Phosphorylation of dTMP to form dTDP in both de novo and salvage pathways of dTTP synthesis. This is Thymidylate kinase from Listeria monocytogenes serotype 4b (strain CLIP80459).